A 33-amino-acid chain; its full sequence is Brevinin-2CDYb (33 aa).

Cys-27 and Cys-33 form a disulfide bridge.

Belongs to the frog skin active peptide (FSAP) family. Brevinin subfamily. Expressed by the skin glands.

The protein localises to the secreted. Functionally, antimicrobial peptide. The sequence is that of Brevinin-2CDYb from Rana dybowskii (Dybovsky's frog).